A 119-amino-acid polypeptide reads, in one-letter code: Ribonuclease P protein component (119 aa).

Belongs to the RnpA family. Consists of a catalytic RNA component (M1 or rnpB) and a protein subunit.

The catalysed reaction is Endonucleolytic cleavage of RNA, removing 5'-extranucleotides from tRNA precursor.. Functionally, RNaseP catalyzes the removal of the 5'-leader sequence from pre-tRNA to produce the mature 5'-terminus. It can also cleave other RNA substrates such as 4.5S RNA. The protein component plays an auxiliary but essential role in vivo by binding to the 5'-leader sequence and broadening the substrate specificity of the ribozyme. This Pediococcus pentosaceus (strain ATCC 25745 / CCUG 21536 / LMG 10740 / 183-1w) protein is Ribonuclease P protein component.